The chain runs to 117 residues: Large ribosomal subunit protein bL19 (117 aa).

This sequence belongs to the bacterial ribosomal protein bL19 family.

This protein is located at the 30S-50S ribosomal subunit interface and may play a role in the structure and function of the aminoacyl-tRNA binding site. This Vibrio cholerae serotype O1 (strain ATCC 39541 / Classical Ogawa 395 / O395) protein is Large ribosomal subunit protein bL19.